We begin with the raw amino-acid sequence, 462 residues long: UDP-N-acetylmuramate--L-alanine ligase (462 aa).

Gly-112 to Thr-118 serves as a coordination point for ATP.

This sequence belongs to the MurCDEF family.

The protein resides in the cytoplasm. It catalyses the reaction UDP-N-acetyl-alpha-D-muramate + L-alanine + ATP = UDP-N-acetyl-alpha-D-muramoyl-L-alanine + ADP + phosphate + H(+). Its pathway is cell wall biogenesis; peptidoglycan biosynthesis. In terms of biological role, cell wall formation. The chain is UDP-N-acetylmuramate--L-alanine ligase from Geobacter sulfurreducens (strain ATCC 51573 / DSM 12127 / PCA).